Consider the following 267-residue polypeptide: Glutamate racemase (267 aa).

Residues 13-14 (DS) and 45-46 (YG) contribute to the substrate site. Cys77 functions as the Proton donor/acceptor in the catalytic mechanism. Residue 78-79 (NT) coordinates substrate. Residue Cys192 is the Proton donor/acceptor of the active site. 193–194 (TH) is a binding site for substrate.

This sequence belongs to the aspartate/glutamate racemases family.

It carries out the reaction L-glutamate = D-glutamate. It participates in cell wall biogenesis; peptidoglycan biosynthesis. Provides the (R)-glutamate required for cell wall biosynthesis. This is Glutamate racemase from Sinorhizobium fredii (strain NBRC 101917 / NGR234).